A 357-amino-acid polypeptide reads, in one-letter code: Peptide chain release factor 1 (357 aa).

Gln232 carries the post-translational modification N5-methylglutamine.

It belongs to the prokaryotic/mitochondrial release factor family. Methylated by PrmC. Methylation increases the termination efficiency of RF1.

Its subcellular location is the cytoplasm. In terms of biological role, peptide chain release factor 1 directs the termination of translation in response to the peptide chain termination codons UAG and UAA. The chain is Peptide chain release factor 1 from Maridesulfovibrio salexigens (strain ATCC 14822 / DSM 2638 / NCIMB 8403 / VKM B-1763) (Desulfovibrio salexigens).